Here is a 446-residue protein sequence, read N- to C-terminus: Protein dyf-7 (446 aa).

An N-terminal signal peptide occupies residues 1–24 (MNQLWRASCLQVLITFLLIHQNKA). A ZP domain is found at 35–295 (DCIADSFTVV…KTCYKKVSDS (261 aa)). C211 and C273 are oxidised to a cystine. The helical transmembrane segment at 377–397 (IPLIIMGSLASLLLFSAGAAI) threads the bilayer.

In terms of assembly, monomer under reducing conditions. Homodimer under non-reducing conditions. May also form higher order oligomers. In terms of processing, proteolytically cleaved and secreted in vitro. In the embryo, expressed in the excretory cell and, during dendrite formation, in the non-neuronal cells surrounding the sensory neurons, including hypodermal cells.

It is found in the cell membrane. The protein localises to the cell projection. It localises to the dendrite. The protein resides in the secreted. Required for permeability of amphid and phasmid neurons to external dyes, chemotaxis to ammonium chloride, avoidance of high osmotic stimuli, male mating and dauer formation. Along with dex-1, enables neurite growth and maintenance by anchoring amphid dendritic tips during neuron cell body migration in embryonic and larval development. The protein is Protein dyf-7 of Caenorhabditis elegans.